Here is a 269-residue protein sequence, read N- to C-terminus: 2' cyclic ADP-D-ribose synthase AbTIR (269 aa).

Residues 31–99 (LKTKLSEISR…KQQKDEIEHQ (69 aa)) are a coiled coil. A TIR domain is found at 133–266 (PEYDLFISHA…EIAHQLADVI (134 aa)). Residues S143, K172, and K202 each contribute to the NAD(+) site. E208 is a catalytic residue. Residue K245 coordinates NAD(+).

In terms of assembly, homodimer. In the presence of NAD(+) analog 8-amino-isoquinoline adenine dinucleotide (3AD) forms filaments with 3AD between monomers; conformational changes occur upon 3AD binding.

It catalyses the reaction NAD(+) = 2'cADPR + nicotinamide + H(+). The enzyme catalyses NAD(+) + H2O = ADP-D-ribose + nicotinamide + H(+). It carries out the reaction NADP(+) + H2O = ADP-D-ribose 2'-phosphate + nicotinamide + H(+). Functionally, NAD(+) hydrolase (NADase) that catalyzes cleavage of NAD(+) into ADP-D-ribose (ADPR) and nicotinamide. In addition to ADPR, also generates a cyclization variant of cyclic ADPR (cADPR), termed 2'cADPR (v-cADPR). Cleaves NADP(+), but does not cyclize the product. The protein is 2' cyclic ADP-D-ribose synthase AbTIR of Acinetobacter baumannii (strain 1295743).